Consider the following 408-residue polypeptide: Type II methyltransferase M.VspI (408 aa).

This sequence belongs to the N(4)/N(6)-methyltransferase family.

It carries out the reaction a 2'-deoxyadenosine in DNA + S-adenosyl-L-methionine = an N(6)-methyl-2'-deoxyadenosine in DNA + S-adenosyl-L-homocysteine + H(+). Its function is as follows. A gamma subtype methylase, recognizes the double-stranded sequence 5'-ATTAAT-3', methylates A-5 on both strands, and protects the DNA from cleavage by the VspI endonuclease. This is Type II methyltransferase M.VspI from Vibrio sp. (strain 343).